The sequence spans 1161 residues: DNA-directed RNA polymerase subunit beta' (1161 aa).

Positions 60, 62, 75, and 78 each coordinate Zn(2+). Positions 449, 451, and 453 each coordinate Mg(2+). Residues Cys790, Cys864, Cys871, and Cys874 each coordinate Zn(2+).

This sequence belongs to the RNA polymerase beta' chain family. The RNAP catalytic core consists of 2 alpha, 1 beta, 1 beta' and 1 omega subunit. When a sigma factor is associated with the core the holoenzyme is formed, which can initiate transcription. It depends on Mg(2+) as a cofactor. Zn(2+) serves as cofactor.

It catalyses the reaction RNA(n) + a ribonucleoside 5'-triphosphate = RNA(n+1) + diphosphate. DNA-dependent RNA polymerase catalyzes the transcription of DNA into RNA using the four ribonucleoside triphosphates as substrates. This is DNA-directed RNA polymerase subunit beta' from Clostridioides difficile (strain 630) (Peptoclostridium difficile).